Consider the following 75-residue polypeptide: Exodeoxyribonuclease 7 small subunit (75 aa).

Belongs to the XseB family. Heterooligomer composed of large and small subunits.

It is found in the cytoplasm. The catalysed reaction is Exonucleolytic cleavage in either 5'- to 3'- or 3'- to 5'-direction to yield nucleoside 5'-phosphates.. In terms of biological role, bidirectionally degrades single-stranded DNA into large acid-insoluble oligonucleotides, which are then degraded further into small acid-soluble oligonucleotides. The polypeptide is Exodeoxyribonuclease 7 small subunit (Clostridium perfringens (strain ATCC 13124 / DSM 756 / JCM 1290 / NCIMB 6125 / NCTC 8237 / Type A)).